Reading from the N-terminus, the 290-residue chain is Inorganic pyrophosphatase (290 aa).

Arg-81 contributes to the diphosphate binding site. 3 residues coordinate Mg(2+): Asp-118, Asp-123, and Asp-155.

The protein belongs to the PPase family. Mg(2+) is required as a cofactor.

It is found in the cytoplasm. The catalysed reaction is diphosphate + H2O = 2 phosphate + H(+). The polypeptide is Inorganic pyrophosphatase (ipp-1) (Neurospora crassa (strain ATCC 24698 / 74-OR23-1A / CBS 708.71 / DSM 1257 / FGSC 987)).